A 534-amino-acid chain; its full sequence is NAD(P)H-quinone oxidoreductase chain 4 2 (534 aa).

The next 14 membrane-spanning stretches (helical) occupy residues 9–29, 51–71, 106–126, 130–150, 152–172, 184–204, 227–247, 258–278, 290–310, 326–346, 347–367, 399–419, 432–452, and 479–499; these read FPWLTTVIAYPVLAALFIPLI, WFALFIAVTDLLILLAGFYVG, LILLTAFITTLAILAAWPVTL, LFYFLMLAMYGGQIGVFAVQD, LLFFLMWELELIPVYLLLSIW, FILYTALSSLFILVAGLAMAF, LLMYGAFLIAYGVKLPIFPLH, TAPVHMLLAGILLKMGGYALM, LYFAPVLIVLGVVNIIFAALT, ISHMGFVLIGIGSLTEIGMSG, AMLQMISHGLIGASLFFLVGA, LASLALPGMSGFVAEIMVFIG, LVVVFLAAVGVILTPIYLLSM, and VFIIACLLIPIIGIGLYPKLV.

The protein belongs to the complex I subunit 4 family.

The protein resides in the cellular thylakoid membrane. The catalysed reaction is a plastoquinone + NADH + (n+1) H(+)(in) = a plastoquinol + NAD(+) + n H(+)(out). The enzyme catalyses a plastoquinone + NADPH + (n+1) H(+)(in) = a plastoquinol + NADP(+) + n H(+)(out). NDH-1 shuttles electrons from NAD(P)H, via FMN and iron-sulfur (Fe-S) centers, to quinones in the respiratory chain. The immediate electron acceptor for the enzyme in this species is believed to be plastoquinone. Couples the redox reaction to proton translocation (for every two electrons transferred, four hydrogen ions are translocated across the cytoplasmic membrane), and thus conserves the redox energy in a proton gradient. This Synechococcus sp. (strain JA-2-3B'a(2-13)) (Cyanobacteria bacterium Yellowstone B-Prime) protein is NAD(P)H-quinone oxidoreductase chain 4 2.